Consider the following 324-residue polypeptide: Large ribosomal subunit protein uL3m (324 aa).

Residues 1 to 41 (MAAVPRGLLSRINQFLSIRSITPSSSESLPHCSSFFLIRRF) constitute a mitochondrion transit peptide. Residues 206–229 (PASHGASLSHRSGGSTGQRDAPGK) form a disordered region.

This sequence belongs to the universal ribosomal protein uL3 family. In terms of assembly, part of the 50S ribosomal subunit.

It is found in the mitochondrion. Functionally, one of the primary rRNA binding proteins, it binds directly near the 3'-end of the 23S rRNA, where it nucleates assembly of the 50S subunit. This chain is Large ribosomal subunit protein uL3m, found in Arabidopsis thaliana (Mouse-ear cress).